The primary structure comprises 143 residues: MNCSESQRLQTLLNRLLLELHHRGNASGLGIGTGPSMGMGVVPDPFVGREATSAKGNDAYLYILLIMIFYACLAGGLILAYTRSRKLVEAKDEPPLACVAEQEWVPAAIASADPENGQGLLAEGGHQLAAGALPALAQGAERV.

N-linked (GlcNAc...) asparagine glycosylation is found at Asn-2 and Asn-25. The helical transmembrane segment at 61–81 (LYILLIMIFYACLAGGLILAY) threads the bilayer. Residues 82–143 (TRSRKLVEAK…PALAQGAERV (62 aa)) lie on the Cytoplasmic side of the membrane.

Belongs to the potassium channel KCNE family. Interacts with KCNQ1; impairs KCNQ1 localization in lipid rafts and only conducts current upon strong and continued depolarization. In terms of tissue distribution, detected in embryonal dorsal root and nerve ganglia, in the somites and in myoepicardial layer of the developing heart wall. Detected at lower levels in the central nervous system (CNS) and in developing limb.

The protein localises to the membrane. Its function is as follows. Potassium channel ancillary subunit that is essential for generation of some native K(+) currents by virtue of formation of heteromeric ion channel complex with voltage-gated potassium (Kv) channel pore-forming alpha subunits. Functions as an inhibitory beta-subunit of the repolarizing cardiac potassium ion channel KCNQ1. The polypeptide is Potassium voltage-gated channel subfamily E regulatory beta subunit 5 (Kcne5) (Mus musculus (Mouse)).